The chain runs to 291 residues: ATP synthase gamma chain (291 aa).

It belongs to the ATPase gamma chain family. F-type ATPases have 2 components, CF(1) - the catalytic core - and CF(0) - the membrane proton channel. CF(1) has five subunits: alpha(3), beta(3), gamma(1), delta(1), epsilon(1). CF(0) has three main subunits: a, b and c.

The protein resides in the cell inner membrane. In terms of biological role, produces ATP from ADP in the presence of a proton gradient across the membrane. The gamma chain is believed to be important in regulating ATPase activity and the flow of protons through the CF(0) complex. The polypeptide is ATP synthase gamma chain (Chlorobium limicola (strain DSM 245 / NBRC 103803 / 6330)).